A 363-amino-acid polypeptide reads, in one-letter code: Ribosomal RNA large subunit methyltransferase M (363 aa).

Residues S194, 227-230, D246, D266, and D284 each bind S-adenosyl-L-methionine; that span reads CPGG. Residue K313 is the Proton acceptor of the active site.

This sequence belongs to the class I-like SAM-binding methyltransferase superfamily. RNA methyltransferase RlmE family. RlmM subfamily. In terms of assembly, monomer.

Its subcellular location is the cytoplasm. The catalysed reaction is cytidine(2498) in 23S rRNA + S-adenosyl-L-methionine = 2'-O-methylcytidine(2498) in 23S rRNA + S-adenosyl-L-homocysteine + H(+). In terms of biological role, catalyzes the 2'-O-methylation at nucleotide C2498 in 23S rRNA. This chain is Ribosomal RNA large subunit methyltransferase M, found in Haemophilus influenzae (strain PittEE).